A 78-amino-acid polypeptide reads, in one-letter code: Large ribosomal subunit protein bL28 (78 aa).

Belongs to the bacterial ribosomal protein bL28 family.

The polypeptide is Large ribosomal subunit protein bL28 (Flavobacterium johnsoniae (strain ATCC 17061 / DSM 2064 / JCM 8514 / BCRC 14874 / CCUG 350202 / NBRC 14942 / NCIMB 11054 / UW101) (Cytophaga johnsonae)).